The chain runs to 137 residues: Cellular retinoic acid-binding protein 1 (137 aa).

A Nuclear localization signal motif is present at residues 21 to 31 (RALGVNAMLRK). 132-134 (RIY) serves as a coordination point for all-trans-retinoate.

Belongs to the calycin superfamily. Fatty-acid binding protein (FABP) family.

The protein resides in the cytoplasm. Its function is as follows. Cytosolic CRABPs may regulate the access of retinoic acid to the nuclear retinoic acid receptors. This is Cellular retinoic acid-binding protein 1 (CRABP1) from Pelodiscus sinensis (Chinese softshell turtle).